A 258-amino-acid polypeptide reads, in one-letter code: 5'-nucleotidase SurE (258 aa).

4 residues coordinate a divalent metal cation: Asp9, Asp10, Ser42, and Asn96.

It belongs to the SurE nucleotidase family. It depends on a divalent metal cation as a cofactor.

It is found in the cytoplasm. The catalysed reaction is a ribonucleoside 5'-phosphate + H2O = a ribonucleoside + phosphate. Functionally, nucleotidase that shows phosphatase activity on nucleoside 5'-monophosphates. In Campylobacter jejuni subsp. jejuni serotype O:23/36 (strain 81-176), this protein is 5'-nucleotidase SurE.